We begin with the raw amino-acid sequence, 905 residues long: MTSATSPIILKWDPKSLEIRTLTVERLLEPLVTQVTTLVNTSNKGPSGKKKGRSKKAHVLAASVEQATQNFLEKGEQIAKESQDLKEELVAAVEDVRKQGETMRIASSEFADDPCSSVKRGTMVRAARALLSAVTRLLILADMADVMRLLSHLKIVEEALEAVKNATNEQDLANRFKEFGKEMVKLNYVAARRQQELKDPHCRDEMAAARGALKKNATMLYTASQAFLRHPDVAATRANRDYVFKQVQEAIAGISNAAQATSPTDEAKGHTGIGELAAALNEFDNKIILDPMTFSEARFRPSLEERLESIISGAALMADSSCTRDDRRERIVAECNAVRQALQDLLSEYMNNTGRKEKGDPLNIAIDKMTKKTRDLRRQLRKAVMDHISDSFLETNVPLLVLIEAAKSGNEKEVKEYAQVFREHANKLVEVANLACSISNNEEGVKLVRMAATQIDSLCPQVINAALTLAARPQSKVAQDNMDVFKDQWEKQVRVLTEAVDDITSVDDFLSVSENHILEDVNKCVIALQEGDVDTLDRTAGAIRGRAARVIHIINAEMENYEAGVYTEKVLEATKLLSETVMPRFAEQVEVAIEALSANVPQPFEENEFIDASRLVYDGVRDIRKAVLMIRTPEELEDDSDFEQEDYDVRSRTSVQTEDDQLIAGQSARAIMAQLPQEEKAKIAEQVEIFHQEKSKLDAEVAKWDDSGNDIIVLAKQMCMIMMEMTDFTRGKGPLKNTSDVINAAKKIAEAGSRMDKLARAVADQCPDSACKQDLLAYLQRIALYCHQLNICSKVKAEVQNLGGELIVSGLDSATSLIQAAKNLMNAVVLTVKASYVASTKYQKVYGTAAVNSPVVSWKMKAPEKKPLVKREKPEEFQTRVRRGSQKKHISPVQALSEFKAMDSF.

Position 632 is a phosphothreonine (Thr632). Ser640, Ser651, and Ser853 each carry phosphoserine. Basic and acidic residues predominate over residues 869–879; it reads VKREKPEEFQT. Positions 869-891 are disordered; it reads VKREKPEEFQTRVRRGSQKKHIS. Positions 880-890 are enriched in basic residues; it reads RVRRGSQKKHI. Position 891 is a phosphoserine (Ser891).

It belongs to the vinculin/alpha-catenin family. As to quaternary structure, interacts with CDH1 and CDH2. Interacts with ZNF639; recruits CTNNA2 to the nucleus. Interacts with F-actin.

Its subcellular location is the cell membrane. The protein localises to the cytoplasm. The protein resides in the cytoskeleton. It is found in the cell junction. It localises to the adherens junction. Its subcellular location is the cell projection. The protein localises to the axon. The protein resides in the nucleus. Its function is as follows. May function as a linker between cadherin adhesion receptors and the cytoskeleton to regulate cell-cell adhesion and differentiation in the nervous system. Required for proper regulation of cortical neuronal migration and neurite growth. It acts as a negative regulator of Arp2/3 complex activity and Arp2/3-mediated actin polymerization. It thereby suppresses excessive actin branching which would impair neurite growth and stability. Regulates morphological plasticity of synapses and cerebellar and hippocampal lamination during development. Functions in the control of startle modulation. The chain is Catenin alpha-2 (CTNNA2) from Pongo abelii (Sumatran orangutan).